We begin with the raw amino-acid sequence, 238 residues long: Survival of motor neuron-related-splicing factor 30 (238 aa).

The region spanning 72–132 (SWKVGEKCMA…RPVEEGRKAK (61 aa)) is the Tudor domain. A Nuclear localization signal motif is present at residues 142–160 (KKEMIAAQREYKKKKALKK).

It belongs to the SMN family. Associates with spliceosomes.

The protein resides in the nucleus speckle. It is found in the nucleus. It localises to the cajal body. Its function is as follows. Involved in spliceosome assembly. This Xenopus tropicalis (Western clawed frog) protein is Survival of motor neuron-related-splicing factor 30 (smndc1).